Consider the following 199-residue polypeptide: Recombination protein RecR (199 aa).

The C4-type zinc finger occupies 56-71 (CAICGNVAEHEQCRIC). Positions 79 to 174 (TVLCVVEEPK…RVTRLASGLP (96 aa)) constitute a Toprim domain.

This sequence belongs to the RecR family.

Functionally, may play a role in DNA repair. It seems to be involved in an RecBC-independent recombinational process of DNA repair. It may act with RecF and RecO. The protein is Recombination protein RecR of Acidothermus cellulolyticus (strain ATCC 43068 / DSM 8971 / 11B).